The chain runs to 501 residues: Dipeptide and tripeptide permease A (501 aa).

The Cytoplasmic segment spans residues 1–21 (MSTANKKPTESVSLNAFKQPK). The chain crosses the membrane as a helical span at residues 22 to 44 (AFYLIFSIELWERFGYYGLQGIM). At 45-59 (AVYLVKQLGMSEADS) the chain is on the periplasmic side. The helical transmembrane segment at 60 to 80 (ITLFSSFSALVYGLVAIGGWL) threads the bilayer. At 81-89 (GDKILGTKR) the chain is on the cytoplasmic side. Residues 90 to 110 (VIMLGAVVLAIGYALVAWSGH) form a helical membrane-spanning segment. Aspartate 111 is a topological domain (periplasmic). The chain crosses the membrane as a helical span at residues 112 to 132 (AGIVYMGMAAIAVGNGLFKAN). At 133–153 (PSSLLSTCYAKDDPRLDGAFT) the chain is on the cytoplasmic side. The helical transmembrane segment at 154-174 (MYYMSVNIGSFFSMLATPWLA) threads the bilayer. At 175-178 (ARYG) the chain is on the periplasmic side. The helical transmembrane segment at 179–199 (WSTAFALSVVGMLITVVNFAF) threads the bilayer. Residues 200 to 219 (CQRWVKSYGSKPDFEPINFR) are Cytoplasmic-facing. A helical membrane pass occupies residues 220–240 (NLLLTIVGIVVLIAVATWLLH). Topologically, residues 241 to 246 (NQDIAR) are periplasmic. Residues 247–267 (MVLGVIALGIVIIFGKEAFSM) form a helical membrane-spanning segment. Residues 268-274 (HGAARRK) lie on the Cytoplasmic side of the membrane. Residues 275-295 (MIVAFILMLQAIIFFVLYSQM) form a helical membrane-spanning segment. Topologically, residues 296–320 (PTSLNFFAIRNVEHSILGIAFEPEQ) are periplasmic. A helical membrane pass occupies residues 321–341 (YQALNPFWIITGSPILAAIYN). The Cytoplasmic segment spans residues 342-352 (RMGDTLPMPMK). The chain crosses the membrane as a helical span at residues 353 to 373 (FAIGMVLCSGAFLILPLGAKF). Residues 374 to 383 (ANDAGIVSVN) are Periplasmic-facing. A helical transmembrane segment spans residues 384-404 (WLIASYGLQSIGELMISGLGL). Residues 405 to 414 (AMVAQLVPQR) lie on the Cytoplasmic side of the membrane. A helical membrane pass occupies residues 415 to 435 (LMGFIMGSWFLTTAGANIIGG). Residues 436–459 (YVANLMAVPSDVTDPLMSLEVYGR) lie on the Periplasmic side of the membrane. Residues 460 to 480 (VFMQIGIATAVIAVLMLLTAP) form a helical membrane-spanning segment. At 481 to 501 (KLNRMTQDDDTAEKGSKAATV) the chain is on the cytoplasmic side.

This sequence belongs to the major facilitator superfamily. Proton-dependent oligopeptide transporter (POT/PTR) (TC 2.A.17) family. DtpA subfamily.

It localises to the cell inner membrane. Proton-dependent permease that transports di- and tripeptides. The polypeptide is Dipeptide and tripeptide permease A (Salmonella typhi).